The following is a 504-amino-acid chain: Cytochrome P450 2S1 (504 aa).

C440 serves as a coordination point for heme.

It belongs to the cytochrome P450 family. The cofactor is heme. Expressed at higher levels in extrahepatic tissues including trachea, lung, stomach, small intestine, colon, kidney, breast, placenta and spleen. Expressed in peripheral blood leukocytes. Constitutively expressed in skin (at protein level).

The protein resides in the endoplasmic reticulum membrane. Its subcellular location is the microsome membrane. The catalysed reaction is all-trans-retinoate + reduced [NADPH--hemoprotein reductase] + O2 = all-trans-5,6-epoxyretinoate + oxidized [NADPH--hemoprotein reductase] + H2O + H(+). It catalyses the reaction all-trans-retinoate + reduced [NADPH--hemoprotein reductase] + O2 = all-trans-4-hydroxyretinoate + oxidized [NADPH--hemoprotein reductase] + H2O + H(+). The enzyme catalyses (5S)-hydroperoxy-(6E,8Z,11Z,14Z)-eicosatetraenoate = 5-oxo-(6E,8Z,11Z,14Z)-eicosatetraenoate + H2O. It carries out the reaction (12S)-hydroperoxy-(5Z,8Z,10E,14Z)-eicosatetraenoate = 12-oxo-(5Z,8Z,10E,14Z)-eicosatetraenoate + H2O. The catalysed reaction is (15S)-hydroperoxy-(5Z,8Z,11Z,13E)-eicosatetraenoate = 15-oxo-(5Z,8Z,11Z,13E)-eicosatetraenoate + H2O. It catalyses the reaction prostaglandin H2 = thromboxane A2. The enzyme catalyses prostaglandin H2 = (12S)-hydroxy-(5Z,8E,10E)-heptadecatrienoate + malonaldehyde. It carries out the reaction (13S)-hydroperoxy-(9Z,11E)-octadecadienoate = 13-oxo-(9Z,11E)-octadecadienoate + H2O. The protein operates within lipid metabolism; fatty acid metabolism. In terms of biological role, a cytochrome P450 monooxygenase involved in the metabolism of retinoids and eicosanoids. In epidermis, may contribute to the oxidative metabolism of all-trans-retinoic acid. For this activity, uses molecular oxygen inserting one oxygen atom into a substrate, and reducing the second into a water molecule, with two electrons provided by NADPH via cytochrome P450 reductase (NADPH--hemoprotein reductase). Additionally, displays peroxidase and isomerase activities toward various oxygenated eicosanoids such as prostaglandin H2 (PGH2) and hydroperoxyeicosatetraenoates (HPETEs). Independently of cytochrome P450 reductase, NADPH, and O2, catalyzes the breakdown of PGH2 to hydroxyheptadecatrienoic acid (HHT) and malondialdehyde (MDA), which is known to act as a mediator of DNA damage. This chain is Cytochrome P450 2S1, found in Homo sapiens (Human).